A 173-amino-acid polypeptide reads, in one-letter code: MARVEL domain-containing protein 1 (173 aa).

Position 1 is an N-acetylmethionine (M1). The Cytoplasmic portion of the chain corresponds to 1–29 (MLPPPPRQPPPQARAARGAVRLQRPFLRS). The region spanning 26–166 (FLRSPLGVLR…SALYGCGRRC (141 aa)) is the MARVEL domain. The chain crosses the membrane as a helical span at residues 30–50 (PLGVLRLLQLLAGAAFWITIA). The Extracellular portion of the chain corresponds to 51–59 (TSKYQGPVH). Residues 60 to 80 (FALFVSVLFWLLTLGLYFLTL) form a helical membrane-spanning segment. At 81–94 (LGKHELVPVLGSRW) the chain is on the cytoplasmic side. The chain crosses the membrane as a helical span at residues 95 to 115 (LMVNVAHDVLAAALYGAATGI). Residues 116–138 (MSDQMQRHSYCNLKDYPLPCAYH) are Extracellular-facing. The chain crosses the membrane as a helical span at residues 139–159 (AFLAAAVCGGVCHGLYLLSAL). Topologically, residues 160 to 173 (YGCGRRCQGKQEVA) are cytoplasmic.

Widely expressed in normal tissues. Down-regulated in multiple primary tumors.

It localises to the cell membrane. Its subcellular location is the cytoplasm. The protein resides in the cytoskeleton. The protein localises to the nucleus. In terms of biological role, microtubule-associated protein that exhibits cell cycle-dependent localization and can inhibit cell proliferation and migration. The protein is MARVEL domain-containing protein 1 (MARVELD1) of Homo sapiens (Human).